The following is a 523-amino-acid chain: 2-isopropylmalate synthase (523 aa).

The region spanning 5–267 is the Pyruvate carboxyltransferase domain; it reads VIIFDTTLRD…HTAINHQEIW (263 aa). Residues Asp-14, His-202, His-204, and Asn-238 each coordinate Mn(2+). The segment at 392-523 is regulatory domain; the sequence is RLDYFSVQSG…QHNENNKETV (132 aa).

Belongs to the alpha-IPM synthase/homocitrate synthase family. LeuA type 1 subfamily. As to quaternary structure, homodimer. The cofactor is Mn(2+).

The protein resides in the cytoplasm. It carries out the reaction 3-methyl-2-oxobutanoate + acetyl-CoA + H2O = (2S)-2-isopropylmalate + CoA + H(+). It functions in the pathway amino-acid biosynthesis; L-leucine biosynthesis; L-leucine from 3-methyl-2-oxobutanoate: step 1/4. Catalyzes the condensation of the acetyl group of acetyl-CoA with 3-methyl-2-oxobutanoate (2-ketoisovalerate) to form 3-carboxy-3-hydroxy-4-methylpentanoate (2-isopropylmalate). This Escherichia coli O45:K1 (strain S88 / ExPEC) protein is 2-isopropylmalate synthase.